We begin with the raw amino-acid sequence, 472 residues long: Arginine biosynthesis bifunctional protein ArgJ, mitochondrial (472 aa).

Residues Thr200, Lys229, Thr240, Glu327, Asn467, and Thr472 each contribute to the substrate site. The Nucleophile role is filled by Thr240.

This sequence belongs to the ArgJ family. As to quaternary structure, heterodimer of an alpha and a beta chain. In terms of processing, the alpha and beta chains are autoproteolytically processed from a single precursor protein within the mitochondrion.

Its subcellular location is the mitochondrion matrix. It catalyses the reaction N(2)-acetyl-L-ornithine + L-glutamate = N-acetyl-L-glutamate + L-ornithine. It carries out the reaction L-glutamate + acetyl-CoA = N-acetyl-L-glutamate + CoA + H(+). It participates in amino-acid biosynthesis; L-arginine biosynthesis; L-ornithine and N-acetyl-L-glutamate from L-glutamate and N(2)-acetyl-L-ornithine (cyclic): step 1/1. It functions in the pathway amino-acid biosynthesis; L-arginine biosynthesis; N(2)-acetyl-L-ornithine from L-glutamate: step 1/4. In terms of biological role, catalyzes two activities which are involved in the cyclic version of arginine biosynthesis: the synthesis of acetylglutamate from glutamate and acetyl-CoA, and of ornithine by transacetylation between acetylornithine and glutamate. The sequence is that of Arginine biosynthesis bifunctional protein ArgJ, mitochondrial from Talaromyces marneffei (strain ATCC 18224 / CBS 334.59 / QM 7333) (Penicillium marneffei).